The chain runs to 246 residues: Probable transcriptional regulatory protein APP7_1210 (246 aa).

This sequence belongs to the TACO1 family.

The protein resides in the cytoplasm. This Actinobacillus pleuropneumoniae serotype 7 (strain AP76) protein is Probable transcriptional regulatory protein APP7_1210.